The sequence spans 195 residues: Imidazoleglycerol-phosphate dehydratase (195 aa).

It belongs to the imidazoleglycerol-phosphate dehydratase family.

The protein localises to the cytoplasm. It catalyses the reaction D-erythro-1-(imidazol-4-yl)glycerol 3-phosphate = 3-(imidazol-4-yl)-2-oxopropyl phosphate + H2O. Its pathway is amino-acid biosynthesis; L-histidine biosynthesis; L-histidine from 5-phospho-alpha-D-ribose 1-diphosphate: step 6/9. This is Imidazoleglycerol-phosphate dehydratase from Ruegeria sp. (strain TM1040) (Silicibacter sp.).